The following is a 59-amino-acid chain: Large ribosomal subunit protein bL32c (59 aa).

Positions 36 to 59 are disordered; that stretch reads KSRSFSGVSEHPKPKGFSRQQTNK.

Belongs to the bacterial ribosomal protein bL32 family.

It localises to the plastid. It is found in the chloroplast. This is Large ribosomal subunit protein bL32c from Oryza nivara (Indian wild rice).